Consider the following 974-residue polypeptide: MAKAGRAGGPPPGGGAPWHLRNVLSDSVESSDDEFFDAREEMAEGKNAILIGMSQWNSNDLVEQIETMGKLDEHQGEGTAPCTSSILQEKQRELYRVSLRRQRFPAQGSIEIHEDSEEGCPQRSCKTHVLLLVLHGGNILDTGAGDPSCKAADIHTFSSVLEKVTRAHFPAALGHILIKFVPCPAICSEAFSLVSHLNPYSHDEGCLSSSQDHVPLAALPLLAISSPQYQDAVATVIERANQVYREFLKSSDGIGFSGQVCLIGDCVGGLLAFDAICYSAGPSGDSPASSSRKGSISSTQDTPVAVEEDCSLASSKRLSKSNIDISSGLEDEEPKRPLPRKQSDSSTYDCEAITQHHAFLSSIHSSVLKDESETPAAGGPQLPEVSLGRFDFDVSDFFLFGSPLGLVLAMRRTVLPGLDGFQVRPACSQVYSFFHCADPSASRLEPLLEPKFHLVPPVSVPRYQRFPLGDGQSLLLADALHTHSPLFLEGSSRDSPPLLDAPASPPQASRFQRPGRRMSEGSSHSESSESSDSMAPVGASRITAKWWGSKRIDYALYCPDVLTAFPTVALPHLFHASYWESTDVVAFILRQVMRYESVNIKESARLDPAALSPANPREKWLRKRTQVKLRNVTANHRANDVIAAEDGPQVLVGRFMYGPLDMVALTGEKVDILVMAEPSSGRWVHLDTEITNSSGRITYNVPRPRRLGVGVYPVKMVVRGDQTCAMSYLTVLPRGMECVVFSIDGSFAASVSIMGSDPKVRPGAVDVVRHWQDLGYMILYITGRPDMQKQRVVSWLSQHNFPQGMIFFSDGLVHDPLRQKAIFLRNLMQECFIKISAAYGSTKDISVYSVLGLPASQIFIVGRPTKKYQTQCQFLSEGYAAHLAALEASHRSRPKKNNSRMILRKGSFGLHAQPEFLRKRNHLRRTMSVQQPDPPAANPKPERAQSQPESDKDHERPLPALSWARGPPKFESVP.

Phosphoserine is present on residues serine 30, serine 31, serine 109, serine 295, serine 298, serine 321, serine 343, and serine 495. Positions 284-304 (GDSPASSSRKGSISSTQDTPV) are disordered. Over residues 292–302 (RKGSISSTQDT) the composition is skewed to polar residues. Disordered regions lie at residues 323–346 (IDIS…SDSS) and 491–536 (SSRD…SMAP). In terms of domain architecture, DDHD spans 390–594 (FDFDVSDFFL…VAFILRQVMR (205 aa)). The span at 520–533 (EGSSHSESSESSDS) shows a compositional bias: low complexity. Serine 612, serine 907, serine 928, and serine 946 each carry phosphoserine. The disordered stretch occupies residues 927 to 974 (MSVQQPDPPAANPKPERAQSQPESDKDHERPLPALSWARGPPKFESVP).

This sequence belongs to the PtdIns transfer protein family. PI transfer class IIA subfamily. As to quaternary structure, interacts with PTK2B via its C-terminus. Detected in brain and spleen, and at low levels in ovary.

The protein resides in the endomembrane system. Catalyzes the transfer of phosphatidylinositol and phosphatidylcholine between membranes (in vitro). Binds calcium ions. The polypeptide is Membrane-associated phosphatidylinositol transfer protein 3 (PITPNM3) (Homo sapiens (Human)).